The sequence spans 514 residues: 2-isopropylmalate synthase (514 aa).

One can recognise a Pyruvate carboxyltransferase domain in the interval 5 to 267; it reads VIIFDTTLRD…ETNIKHEEIH (263 aa). Mn(2+)-binding residues include aspartate 14, histidine 202, histidine 204, and asparagine 238. Residues 392–514 form a regulatory domain region; it reads KLNYLSVQSG…AEIKERIATV (123 aa).

The protein belongs to the alpha-IPM synthase/homocitrate synthase family. LeuA type 1 subfamily. In terms of assembly, homodimer. Mn(2+) serves as cofactor.

It localises to the cytoplasm. The catalysed reaction is 3-methyl-2-oxobutanoate + acetyl-CoA + H2O = (2S)-2-isopropylmalate + CoA + H(+). The protein operates within amino-acid biosynthesis; L-leucine biosynthesis; L-leucine from 3-methyl-2-oxobutanoate: step 1/4. Functionally, catalyzes the condensation of the acetyl group of acetyl-CoA with 3-methyl-2-oxobutanoate (2-ketoisovalerate) to form 3-carboxy-3-hydroxy-4-methylpentanoate (2-isopropylmalate). The chain is 2-isopropylmalate synthase from Photobacterium profundum (strain SS9).